Consider the following 1888-residue polypeptide: E3 ubiquitin-protein ligase UBR3 (1888 aa).

Residues 1 to 24 (MAAAAAAAVGGQQPSQPELPAPGL) are disordered. Residues 118 to 189 (ALCGLVWTAN…ESGFCKRHQI (72 aa)) form a UBR-type zinc finger. The disordered stretch occupies residues 339–362 (GQVDSSDEDDQDGSQGLGKRKRVK). 2 positions are modified to phosphoserine: S343 and S344. 2 consecutive transmembrane segments (helical) span residues 761-781 (MLEG…HLGM) and 919-939 (LLHC…ILMD). 2 disordered regions span residues 1008–1028 (APEV…GSLQ) and 1164–1186 (VPPK…RQKA). Over residues 1016–1028 (PASTSSDNLGSLQ) the composition is skewed to polar residues. Positions 1168 to 1199 (KVTAAEKKTLDKEERRQKARERQQKLLAEFAS) form a coiled coil. Positions 1170–1186 (TAAEKKTLDKEERRQKA) are enriched in basic and acidic residues. Residue S1199 is modified to Phosphoserine. The RING-type; degenerate zinc finger occupies 1306 to 1364 (DSSCLLAVSIGWEGGVYVQTCGHTLHIDCHKSYMESLRNDQVLQGFSVDKGEFTCPLCR). A helical transmembrane segment spans residues 1806 to 1826 (QNCGAGTGIFLLINASVIIII).

The protein belongs to the E3 ubiquitin-protein ligase UBR1-like family. In terms of assembly, interacts with UBE2A and UBE2B.

The protein resides in the membrane. It catalyses the reaction S-ubiquitinyl-[E2 ubiquitin-conjugating enzyme]-L-cysteine + [acceptor protein]-L-lysine = [E2 ubiquitin-conjugating enzyme]-L-cysteine + N(6)-ubiquitinyl-[acceptor protein]-L-lysine.. The protein operates within protein modification; protein ubiquitination. In terms of biological role, E3 ubiquitin-protein ligase which is a component of the N-end rule pathway. Does not bind to proteins bearing specific N-terminal residues that are destabilizing according to the N-end rule, leading to their ubiquitination and subsequent degradation. May play a role in Shh signaling by mediating the ubiquitination of Kif7. May be important for MYH9 function in certain tissues, possibly by regulating the ubiquitination of MYH9 and consequently affecting its interaction with MYO7A. This Homo sapiens (Human) protein is E3 ubiquitin-protein ligase UBR3 (UBR3).